A 318-amino-acid chain; its full sequence is Protein-methionine-sulfoxide reductase catalytic subunit MsrP (318 aa).

The tat-type signal signal peptide spans 1–40 (MNRFTRYDVTPEVIFNQRRQIIKAMGLGAAALSLPNIGFA). Mo-molybdopterin contacts are provided by residues N72, 75–76 (YE), C130, T165, N217, R222, and 233–235 (SIK).

The protein belongs to the MsrP family. As to quaternary structure, heterodimer of a catalytic subunit (MsrP) and a heme-binding subunit (MsrQ). Requires Mo-molybdopterin as cofactor. Post-translationally, predicted to be exported by the Tat system. The position of the signal peptide cleavage has not been experimentally proven.

The protein resides in the periplasm. It catalyses the reaction L-methionyl-[protein] + a quinone + H2O = L-methionyl-(S)-S-oxide-[protein] + a quinol. The catalysed reaction is L-methionyl-[protein] + a quinone + H2O = L-methionyl-(R)-S-oxide-[protein] + a quinol. Its function is as follows. Part of the MsrPQ system that repairs oxidized periplasmic proteins containing methionine sulfoxide residues (Met-O), using respiratory chain electrons. Thus protects these proteins from oxidative-stress damage caused by reactive species of oxygen and chlorine generated by the host defense mechanisms. MsrPQ is essential for the maintenance of envelope integrity under bleach stress, rescuing a wide series of structurally unrelated periplasmic proteins from methionine oxidation. The catalytic subunit MsrP is non-stereospecific, being able to reduce both (R-) and (S-) diastereoisomers of methionine sulfoxide. The polypeptide is Protein-methionine-sulfoxide reductase catalytic subunit MsrP (Actinobacillus pleuropneumoniae serotype 3 (strain JL03)).